A 293-amino-acid polypeptide reads, in one-letter code: Ribosomal RNA small subunit methyltransferase A (293 aa).

Positions 29, 31, 56, 77, 102, and 127 each coordinate S-adenosyl-L-methionine.

This sequence belongs to the class I-like SAM-binding methyltransferase superfamily. rRNA adenine N(6)-methyltransferase family. RsmA subfamily.

It localises to the cytoplasm. It carries out the reaction adenosine(1518)/adenosine(1519) in 16S rRNA + 4 S-adenosyl-L-methionine = N(6)-dimethyladenosine(1518)/N(6)-dimethyladenosine(1519) in 16S rRNA + 4 S-adenosyl-L-homocysteine + 4 H(+). In terms of biological role, specifically dimethylates two adjacent adenosines (A1518 and A1519) in the loop of a conserved hairpin near the 3'-end of 16S rRNA in the 30S particle. May play a critical role in biogenesis of 30S subunits. The sequence is that of Ribosomal RNA small subunit methyltransferase A from Lysinibacillus sphaericus (strain C3-41).